A 518-amino-acid polypeptide reads, in one-letter code: Xaa-Pro aminopeptidase 3 (518 aa).

A mitochondrion-targeting transit peptide spans 1–48; it reads MNNICKLNKFIISKSSSSLSSTSSKIKTNCLIKNAKMFSSSLNLNRFY. Residues Tyr314, Asp345, Asp356, His434, His441, Glu461, and Glu485 each contribute to the substrate site. Residues Asp345, Asp356, and His434 each coordinate Mn(2+). Residues Glu461 and Glu485 each coordinate Mn(2+).

This sequence belongs to the peptidase M24B family. Homodimer. The cofactor is Mn(2+).

It localises to the mitochondrion. It is found in the cytoplasm. It carries out the reaction Release of any N-terminal amino acid, including proline, that is linked to proline, even from a dipeptide or tripeptide.. Functionally, catalyzes the removal of a penultimate prolyl residue from the N-termini of peptides, such as Leu-Pro-Ala. Also shows low activity towards peptides with Ala or Ser at the P1 position. In Dictyostelium discoideum (Social amoeba), this protein is Xaa-Pro aminopeptidase 3 (xpnpep3).